The following is a 156-amino-acid chain: Peptide deformylase (156 aa).

The Fe cation site is built by C90 and H132. E133 is a catalytic residue. Residue H136 participates in Fe cation binding.

It belongs to the polypeptide deformylase family. Requires Fe(2+) as cofactor.

It catalyses the reaction N-terminal N-formyl-L-methionyl-[peptide] + H2O = N-terminal L-methionyl-[peptide] + formate. In terms of biological role, removes the formyl group from the N-terminal Met of newly synthesized proteins. Requires at least a dipeptide for an efficient rate of reaction. N-terminal L-methionine is a prerequisite for activity but the enzyme has broad specificity at other positions. The protein is Peptide deformylase of Natranaerobius thermophilus (strain ATCC BAA-1301 / DSM 18059 / JW/NM-WN-LF).